Reading from the N-terminus, the 756-residue chain is MGKRGSRSQSQLLNTLTKKQKKHLRDFGEEHPFYDRVSRKEAKPQICQLSESSDSSDSESDSESEPQQVSGYHRLLATLKNVSEEEEEDEEEEEEEDSIVDDAEMNDEDGGSDVSVEEEMAAESTESPENVALSADPEGKEDGEEPPGTSQTSPEEFTDAKHESLFSLETNFLEEESGDNSSLKASQDPFLQHVNKELKEKAIQAVATNPKTTHELKWPILGQLFFSSKFQKLETFKPPKDIDLKSLHLQKPLESTWTKTNSQFLSGPQKSSSPFTPLQKELFLIMNSYRDLFYPERTALKNGEEIRHVYCLHVINHILKANAQVLGNNSRRRSQKFGVGDDDDFRDQGLTRPKVLIVVPFREAALRVVQLFISLLEGDSKKKIIVSNKKRFQGEYGSDPEERPPNLKRPEDYEAVFVGNIDDHFRIGVAILQRSIRLYAPFYSSDILIASPLGLRTIIGGEGEKKRDFDFLSSIELLIIDQADIYLMQNWEHVLHLMNHMNLLPLDSHGVDFSRVRMWSLNNWSKYYRQTLLFGALQDAQINSVFNKYCVNMQGQVAVRNVPMTGSISHVLVQLPHVFQRMEAENLASVIDARFNFFVNKILPQYRDAVMSHTLIYIPSYFDFVRLRNYFKKEELNFTHICEYTQKSGVSRARHFFLQGEKQFLLFTERFHFYKRYTIKGIRNLIFYELPTYPHFYSEICNMLRATNRGEEATWTCTVLYSKYDAQRLAAVVGVERAAQMLQSNKNVHLFITGEK.

The disordered stretch occupies residues 1–159 (MGKRGSRSQS…SQTSPEEFTD (159 aa)). Promotes p53/TP53 degradation stretches follow at residues 1–185 (MGKR…SLKA) and 573–635 (VQLP…KKEE). Phosphoserine is present on Ser10. Positions 25-43 (RDFGEEHPFYDRVSRKEAK) are enriched in basic and acidic residues. 6 positions are modified to phosphoserine: Ser50, Ser52, Ser58, Ser60, Ser62, and Ser64. Composition is skewed to acidic residues over residues 54 to 64 (DSSDSESDSES) and 84 to 121 (EEEEEDEEEEEEEDSIVDDAEMNDEDGGSDVSVEEEMA). The tract at residues 636–697 (LNFTHICEYT…YELPTYPHFY (62 aa)) is represses p53/TP53 degradation.

Belongs to the UTP25 family. In terms of assembly, interacts with CAPN3; the interaction is required for CAPN3 translocation to the nucleolus. Post-translationally, phosphorylated. Phosphorylation is required to promote p53/TP53 degradation in the nucleolus which promotes cell cycle progression and liver development. As to expression, expressed in colon.

The protein resides in the nucleus. Its subcellular location is the nucleolus. Component of the ribosomal small subunit processome for the biogenesis of ribosomes, functions in pre-ribosomal RNA (pre-rRNA) processing. Essential for embryonic development in part through the regulation of p53 pathway. Controls the expansion growth of digestive organs and liver. Also involved in the sympathetic neuronal development. Mediates, with CAPN3, the proteasome-independent degradation of p53/TP53. The polypeptide is U3 small nucleolar RNA-associated protein 25 homolog (Homo sapiens (Human)).